The sequence spans 550 residues: Atherin (550 aa).

Residues Met-1–Glu-11 show a composition bias toward pro residues. 2 disordered regions span residues Met-1–Tyr-32 and Ser-93–Pro-468. Low complexity predominate over residues Thr-12–Pro-30. In terms of domain architecture, SAMD1-like winged helix (WH) spans Ser-24–Val-100. Thr-108 bears the Phosphothreonine mark. The segment covering Ala-125–Pro-138 has biased composition (pro residues). The segment covering Val-139–Ala-160 has biased composition (low complexity). Phosphoserine is present on Ser-163. Low complexity predominate over residues Gly-170–Leu-179. Composition is skewed to pro residues over residues Ala-180 to Ala-205 and Pro-214 to Glu-245. A compositionally biased stretch (low complexity) spans Gly-246–Pro-257. At Ser-270 the chain carries Phosphoserine. Basic and acidic residues predominate over residues Ala-290 to Arg-300. Over residues Lys-337–Val-355 the composition is skewed to acidic residues. Residues Ser-437 to Pro-448 show a composition bias toward pro residues. The 69-residue stretch at Trp-474–Asp-542 folds into the SAM domain.

In terms of assembly, homopolymerize into a closed pentameric ring. Interacts (via SAM domain) with L3MBTL3 (via SAM domain); the interaction mediates L3MBTL3 binding to chromatin. Interacts (via WH domain) with KDM1A; the interaction modulates KDM1A function.

Its subcellular location is the nucleus. It localises to the chromosome. The protein resides in the secreted. Its function is as follows. Unmethylated CpG islands (CGIs)-binding protein which localizes to H3K4me3-decorated CGIs, where it acts as a transcriptional repressor. Tethers L3MBTL3 to chromatin and interacts with the KDM1A histone demethylase complex to modulate H3K4me2 and H3K4me3 levels at CGIs. Plays a role in atherogenesis by binding with LDL on cell surface and promoting LDL oxidation which leads to the formation of foam cell. This is Atherin (SAMD1) from Oryctolagus cuniculus (Rabbit).